The chain runs to 261 residues: Sepiapterin reductase (261 aa).

Residues 16–22, 44–45, and 71–72 contribute to the NADP(+) site; these read GASRGFG, RT, and DL. Substrate-binding positions include 158-159 and tyrosine 171; that span reads SL. Lysine 175 is a binding site for NADP(+). Glycine 200 contributes to the substrate binding site. An NADP(+)-binding site is contributed by 202–207; sequence LDTDMH. A substrate-binding site is contributed by aspartate 258.

The protein belongs to the sepiapterin reductase family. Homodimer.

The protein localises to the cytoplasm. The catalysed reaction is L-erythro-7,8-dihydrobiopterin + NADP(+) = L-sepiapterin + NADPH + H(+). The enzyme catalyses (6R)-L-erythro-5,6,7,8-tetrahydrobiopterin + 2 NADP(+) = 6-pyruvoyl-5,6,7,8-tetrahydropterin + 2 NADPH + 2 H(+). In terms of biological role, catalyzes the final one or two reductions in tetra-hydrobiopterin biosynthesis to form 5,6,7,8-tetrahydrobiopterin. The chain is Sepiapterin reductase (spr) from Xenopus tropicalis (Western clawed frog).